The chain runs to 655 residues: Polycyclic ketone monooxygenase (655 aa).

Positions 89, 113, 114, 121, 124, 132, 133, 139, and 183 each coordinate FAD. The NADPH site is built by Thr277, Thr280, Thr301, Lys425, and Val452. Cys424 and Cys596 are disulfide-bonded. Residues Thr492 and Asn541 each coordinate FAD. Tyr600 contributes to the NADPH binding site.

It belongs to the FAD-binding monooxygenase family. FAD is required as a cofactor.

In terms of biological role, polycyclic ketone monooxygenase (PockeMO) that displays excellent enantioselectivity, acts on various ketones, and is particularly active on polycyclic molecules. Breaks C-C bonds through the insertion of a single oxygen atom adjacent to a carbonyl moiety, yielding esters or lactones from ketones. PockeMO is able to convert linear ketones (including cyclohexane and to a lesser extend 4-octanone), cyclic ketones (including cyclohexanone and cyclooctanone), bicyclic ketones and polycyclic ketones (steroids). Performs oxidation of the keto functionalities at both the A and D rings of steroids. Particularly, oxidizes the A ring of stanolone or pregnenolone. Selectively oxidizes the D ring of androstenedione or androstadienedione, steroids with keto groups in both the A and D rings, to yield the pharmaceutically relevant testo(lo)lactone. The chain is Polycyclic ketone monooxygenase from Thermothelomyces thermophilus (strain ATCC 42464 / BCRC 31852 / DSM 1799) (Sporotrichum thermophile).